Reading from the N-terminus, the 318-residue chain is NLP effector protein 9 (318 aa).

Residues 1–19 (MRLFAFLWSSVAFLSTVQA) form the signal peptide. A compositionally biased stretch (low complexity) spans 24 to 35 (TASQTQDDSSTP). 2 disordered regions span residues 24 to 43 (TASQ…PDKY) and 50 to 93 (LRTK…PAPT). A compositionally biased stretch (polar residues) spans 55-65 (PMATPNRTIMP). N-linked (GlcNAc...) asparagine glycosylation is present at Asn60. A compositionally biased stretch (pro residues) spans 73-93 (PEPPTPEPTYLPTLSPTPAPT). Positions 185 to 195 (AIMYSWYFPKD) match the Conserved undecapeptide motif I motif. Positions 202-208 (GHRHDWE) match the Hepta-peptide GHRHDWE motif II motif.

This sequence belongs to the Necrosis inducing protein (NPP1) family.

It localises to the secreted. Secreted effector that contributes to virulence during infection by P.capsici. Induces distinct chlorosis at 3 days after inoculation of host C.annuum leaves, and all the chlorotic areas gradually turn brown and become moderately necrotic at 7 days after inoculation. Caused only small necrotic areas at 7 days after non-host N.benthamiana leaves infection. The polypeptide is NLP effector protein 9 (Phytophthora capsici).